A 487-amino-acid chain; its full sequence is Galactose-1-phosphate uridylyltransferase (487 aa).

It belongs to the galactose-1-phosphate uridylyltransferase type 2 family.

The protein localises to the cytoplasm. It catalyses the reaction alpha-D-galactose 1-phosphate + UDP-alpha-D-glucose = alpha-D-glucose 1-phosphate + UDP-alpha-D-galactose. It functions in the pathway carbohydrate metabolism; galactose metabolism. The protein is Galactose-1-phosphate uridylyltransferase of Lactiplantibacillus plantarum (strain ATCC BAA-793 / NCIMB 8826 / WCFS1) (Lactobacillus plantarum).